Reading from the N-terminus, the 417-residue chain is Lissencephaly-1 homolog (417 aa).

In terms of domain architecture, LisH spans 7-39 (QKEELNGAILDYFDSSGYKLTSTEFTKETNIEL). Residues 52-80 (TSVIRLQKKVMDLEAKVSQLEEELNNGGR) adopt a coiled-coil conformation. The interval 72–93 (EEELNNGGRGPARRGKEDALPR) is disordered. WD repeat units lie at residues 102 to 143 (GHRN…RTLK), 144 to 185 (GHTN…KTLH), 186 to 225 (GHDHNVSCVRFLPSGDQLVSSSRDKSIKVWETATGYCTKT), 228 to 267 (GHEDWVRKVIVSEDGTTLASCSNDQTARVWNLAKGECLLT), 270 to 339 (EHSH…CLQT), 342 to 383 (GHDN…KTIN), and 385 to 417 (AHSHFISCLDFCSHNPHIATGGVDDIIKIWKLG).

The protein belongs to the WD repeat LIS1/nudF family.

It is found in the cytoplasm. The protein resides in the cytoskeleton. It localises to the microtubule organizing center. Its subcellular location is the centrosome. Its function is as follows. Positively regulates the activity of the minus-end directed microtubule motor protein dynein. May enhance dynein-mediated microtubule sliding by targeting dynein to the microtubule plus end. Required for several dynein- and microtubule-dependent processes. The polypeptide is Lissencephaly-1 homolog (Heterostelium pallidum (strain ATCC 26659 / Pp 5 / PN500) (Cellular slime mold)).